Reading from the N-terminus, the 857-residue chain is MCPSDFSSRSLFLEAKEEEYKQRRRVPLDSRRRVRRACLSCRAKKIRCSGSEPCQACIATPSQCKYADSLKERTPSKQFIAELSQRQKCFEYLMELLCPSLPHDTRSLVKLCKHVESSLASGSDVRSLLIPGSIDQSVLKVAATNNKDDSSAVKSANVSFPSSSTPPSSDSNFSSIQNTDLNTSIKFTENISANAIHVNQDKVIRSANNLIINSQPILPVRSFLDALGEPIYLSPTSSTYFLNSVLASLQLNSSNTPESLLIDYQSKIPEDLSSSLLPLELNTLQSTPTSVSVGSASSQGTHEYSIINLTSNHSSFSLKALKKIAHNLLPPVSVAERYANEFFLRYQSFFYFYPPSVFSNRYQILADGLVNSDTLDTGFLAVALLIVVLGHFSNNNINVLPKEVQLSHIDSMIQISEQLISSLLNRCTLSSIQAVFLLSLYHFLTGNFKCAYSYLGFAIHSAHTLGLEHGSTDNSTLNEVSTEETSIRICWSLRVLASFLYIQSGITPIINLFPNGLNSLKLPTVVPELEARHLPSSVFHFVAIIKYAEISVRSLNSLYESSSDYLMDVSNFPKLLLKVERIYSQARNWKLNLTHQQLNGTNDTSDLLFHSNVSLHLFYHYLIVKVSCPIMFFYLNNWYSVKPSSFTKGLNNKPSLEDVFSNLETCYESAKAIVQLSSKLLSAGQMDKCFYLEFEILYCSAIVLFLFSVMHLGAENPLLESIYLLEDMGSRTIDSKVRLEKLKSAIEIFDINSATEMPINEPLSASFESVNKENSQSGYMAWQNWVTELSSSNIPLGHALGNPESNNSSNSFKPSHPSQSFLVNESLDFSSNPKEPPFLPWSEALLNMDMQLNRLGP.

The zn(2)-C6 fungal-type DNA-binding region spans 38-64 (CLSCRAKKIRCSGSEPCQACIATPSQC). 2 disordered regions span residues 152–175 (AVKS…NFSS) and 797–819 (GHAL…HPSQ). The span at 159 to 175 (SFPSSSTPPSSDSNFSS) shows a compositional bias: low complexity. Residues 803-819 (PESNNSSNSFKPSHPSQ) show a composition bias toward polar residues.

The protein localises to the nucleus. In terms of biological role, transcription factor that activates the nmt1 promoter. Regulation of thiamine repressible genes. Negatively regulates conjugation during meiosis, by inducing negative regulators which delay conjugation. Involved in thi1 regulation. This chain is Thiamine repressible genes regulatory protein thi5 (thi5), found in Schizosaccharomyces pombe (strain 972 / ATCC 24843) (Fission yeast).